We begin with the raw amino-acid sequence, 347 residues long: Oxygen sensor histidine kinase NreB (347 aa).

[4Fe-4S] cluster-binding residues include C59, C62, C74, and C77. Positions 153-347 (RISRELHDGI…IVTLEVPITD (195 aa)) constitute a Histidine kinase domain. H159 bears the Phosphohistidine; by autocatalysis mark.

The cofactor is [4Fe-4S] cluster. In terms of processing, autophosphorylated.

The protein localises to the cytoplasm. The enzyme catalyses ATP + protein L-histidine = ADP + protein N-phospho-L-histidine.. Its activity is regulated as follows. Activated by cysteine desulfurase, Fe(2+) ions and cysteine and inhibited by oxygen and ADP. In terms of biological role, member of the two-component regulatory system NreB/NreC involved in the control of dissimilatory nitrate/nitrite reduction in response to oxygen. NreB functions as a direct oxygen sensor histidine kinase which is autophosphorylated, in the absence of oxygen, probably at the conserved histidine residue, and transfers its phosphate group probably to a conserved aspartate residue of NreC. NreB/NreC activates the expression of the nitrate (narGHJI) and nitrite (nir) reductase operons, as well as the putative nitrate transporter gene narT. The polypeptide is Oxygen sensor histidine kinase NreB (nreB) (Staphylococcus carnosus (strain TM300)).